We begin with the raw amino-acid sequence, 185 residues long: Large ribosomal subunit protein uL5 (185 aa).

This sequence belongs to the universal ribosomal protein uL5 family. As to quaternary structure, part of the 50S ribosomal subunit; part of the 5S rRNA subcomplex. Contacts the 5S rRNA and the P site tRNA. Forms a bridge to the 30S subunit in the 70S ribosome. In terms of processing, both N-terminus methionine truncation and retention have been observed for this protein. Post-translationally, may be methylated twice, on undetermined residues.

Functionally, this is one of the proteins that bind and probably mediate the attachment of the 5S RNA into the large ribosomal subunit, where it forms part of the central protuberance. In the 70S ribosome it contacts protein S13 of the 30S subunit (bridge B1b), connecting the 2 subunits; this bridge is implicated in subunit movement. Contacts the P site tRNA; the 5S rRNA and some of its associated proteins might help stabilize positioning of ribosome-bound tRNAs. The protein is Large ribosomal subunit protein uL5 of Rhodopseudomonas palustris (strain ATCC BAA-98 / CGA009).